Reading from the N-terminus, the 248-residue chain is MAEAFTREDYVFMAQLNENAERYDEMVETMRKISGMEGELSDKERNLLSVAYKNVIGPRRAAWRIVSSIEAKEKGRQKPNAKRIEQIRVYRQKIEKELSDICNDILKLLQEQFVPRSTNADAKVFYYKMQGDYYRYLAEYSSGEDKEKIAGSALNAYNSAFEISQQLPPTHPIRLGLALNFSVFYYEILASPDRACELARKAFDAAITDLDKLTEESYKDSTLIMQLLRDNLNLWVTDSAGDDNAEEK.

Coiled-coil stretches lie at residues 13–33 and 91–111; these read MAQL…MRKI and RQKI…LLQE. Position 135-136 (135-136) interacts with O-phospho-L-serine; it reads RY. The residue at position 214 (Thr-214) is a Phosphothreonine. The Putative polyglycylation target motif (T/G)X0-1(D/E)X1-3-G(D/E)X1-2(gE)2-4, where X is polar or negatively charged amino acid, and gE is polyglycylated glutamine signature appears at 237–248; that stretch reads TDSAGDDNAEEK. 5-glutamyl polyglycine is present on Glu-246.

Belongs to the 14-3-3 family. Homodimer. Homodimerizes via N-terminal domains. Oligomerizes forming homotrimers, homotetramers and protein filaments. Oligomerization is hindered by polyglycylation in vivo. Interacts with a large number of both cytosolic and membrane proteins in trophozoites and encysting parasites. Interacts with a serine/threonine protein kinase GL50803_112076 (gCDC7). Component of a multiprotein complex containing gCDC7 and GL50803_94117 (gDBF4), a regulatory subunit of gCDC7, during both the trophozoite and encysting stages of the parasite. Interacts with fructose-bisphosphate aldolase GL50803_11043 (gFBA), pyruvate kinase GL50803_17143 (gPyk), acetyl-CoA synthetase GL50803_13608 (gACS), protein kinase GL50803_22165 (gSTE), DEAD box RNA helicase GL50803_34684 (gVASA) and Golgi/cell cycle associated protein GL50803_17472 (gGCCA). Interacts with actin. Interacts with both monomeric phosphorylated and unphosphorylated actin. The interaction is enhanced by phosphorylation of actin and inhibited by Rho GTPase Rac. In terms of processing, phosphorylated constitutively throughout the life cycle. Phosphorylation is very high in trophozoites and encysting cells of 12 hours. Phosphorylated during excystation. Phosphorylation promotes its binding to various target proteins and is critical for encystation process. Phosphorylation modification is not influenced by polyglycylation modification. Post-translationally, polyglycylated on a glutamate residue, resulting in polyglycine chain on the gamma-carboxyl group. Polyglycylated by the tubulin--tyrosine ligase-like protein GL50803_8456 (gTTLL3). The polyglycine chain is shortened by metallopeptidases of the M20 family, namely dipeptidases GL50803_15832 (gDIP1) and GL50803_8407 (gDIP2). The length of the polyglycine chain is developmental stage-dependent. In trophozoites, glycine residues range from 10 to 31, with the greatest occurrence of 21 residues. In 12 hour encystation stage, glycine residues range from 6 to 22, with the greatest occurrence of 10 residues. The differential rate of polyglycylation/deglycylation during the encystation process regulates the intracellular localization of this protein. Relocalizes partially from the cytoplasm inside the nuclei following the shortening of the polyglycine chain in encysting cells. Polyglycylation modification is not influenced by phosphorylation modification. Polyglycylation prevents oligomerization in vivo.

It localises to the cytoplasm. The protein localises to the cytoskeleton. It is found in the nucleus. The protein resides in the cell projection. Its subcellular location is the cilium. It localises to the flagellum. The protein localises to the spindle. It is found in the nucleus envelope. The protein resides in the endoplasmic reticulum. Adapter protein implicated in the regulation of a large spectrum of both general and specialized signaling pathways. Binds to a large number of partners, usually by recognition of a phosphoserine or phosphothreonine motif. Binding generally results in the modulation of the activity of the binding partner. Binds with varying affinity to various synthetic phosphopeptides having a consensus binding motif RSX(pS/pT)XP, called mode-1, where X is any residue and pS/pT is a phosphorylated serine/threonine, and to synthetic phosphopeptides having a consensus binding motif Xp(S/T)X1-2-COOH, called mode-3, in which the phosphorylated residue occupies the penultimate C-terminal position in the target protein, but does not bind to their unphosphorylated counterparts. Binds to synthetic human RAF1 phosphopeptides, but not to their unphosphorylated forms. Binds to difopein, a polypeptide containing a phosphorylation-independent binding motif. Involved in encystation. Involved in cell proliferation. Required for actin and tubulin cytoskeletal organization. Regulates actin filament formation and nuclear size. This chain is 14-3-3 protein, found in Giardia intestinalis (strain ATCC 50803 / WB clone C6) (Giardia lamblia).